A 1893-amino-acid chain; its full sequence is CDK5 regulatory subunit-associated protein 2 (1893 aa).

The CM1 motif; interacts with the gTuRC stretch occupies residues 51–94 (TVSPTRARNMKDFENQITELKKENFNLKLRIYFLEERMQQEFHG). The tract at residues 58-196 (RNMKDFENQI…TEKALRLRLE (139 aa)) is interaction with NCKAP5L. Serine 547 carries the post-translational modification Phosphoserine. The interval 926–1208 (PGITNREAKK…LENLKQQLEE (283 aa)) is interaction with MAPRE1. Residue threonine 1001 is modified to Phosphothreonine. Disordered stretches follow at residues 1015–1071 (AAYQ…NPED) and 1084–1105 (SKSQ…SINT). The segment covering 1034–1048 (WRDKEMDSDQQRSYE) has biased composition (basic and acidic residues). Serine 1238 is subject to Phosphoserine. Positions 1347–1381 (LPESPEPSASHALSDYETSEKSFFSRDQKQDNETE) are disordered. Positions 1364 to 1381 (TSEKSFFSRDQKQDNETE) are enriched in basic and acidic residues. Serine 1490 carries the phosphoserine modification. Composition is skewed to basic and acidic residues over residues 1500-1519 (SVKE…ERHN) and 1651-1661 (PDKHDGDKYPM). Disordered stretches follow at residues 1500–1521 (SVKE…HNQQ), 1646–1706 (EVPL…ATST), and 1754–1774 (QTQE…PHPA). A phosphoserine mark is found at serine 1663 and serine 1666. Polar residues-rich tracts occupy residues 1663 to 1706 (SDNS…ATST) and 1754 to 1766 (QTQE…SQEL). An interaction with CDK5R1 region spans residues 1726-1768 (HVLGLIEDYEALLKQISQGQRLLAEMDIQTQEAPSSTSQELGT). The interaction with PCNT and AKAP9 stretch occupies residues 1726 to 1893 (HVLGLIEDYE…GTCSPSRPGS (168 aa)). The segment at 1861-1870 (VVTHKILRKA) is required for centrosomal attachment, Golgi localization and CALM1 interaction. Serine 1893 is modified (phosphoserine).

In terms of assembly, homodimer. Interacts with CDK5R1 (p35 form). CDK5RAP1, CDK5RAP2 and CDK5RAP3 show competitive binding to CDK5R1. May form a complex with CDK5R1 and CDK5. Interacts with pericentrin/PCNT; the interaction is leading to centrosomal and Golgi localization of CDK5RAP2 and PCNT. Interacts with AKAP9; the interaction targets CDK5RAP2 and AKAP9 to Golgi apparatus. Interacts with MAPRE1; the interaction is direct and targets CDK5RAP2 and EB1/MAPRE1 to microtubule plus ends. Interacts with TUBG1; the interaction is leading to the centrosomal localization of CDK5RAP2 and TUBG1. Interacts with TUBGCP3. Interacts with CALM1. Interacts with CDC20. Interacts with CEP68; degradation of CEP68 in early mitosis leads to removal of CDK5RAP2 from the centrosome which promotes centriole disengagement and subsequent centriole separation. Interacts with NCKAP5L. Forms a pericentrosomal complex with AKAP9, MAPRE1 and PDE4DIP isoform 13/MMG8/SMYLE; within this complex, MAPRE1 binding to CDK5RAP2 may be mediated by PDE4DIP. Interacts with LGALS3BP; this interaction may connect the pericentrosomal complex to the gamma-tubulin ring complex (gTuRC) to promote microtubule assembly and acetylation. Interacts with CCDC66. Associates (via CM1 motif) with TUBGCP2 of the gTuRC; the interaction plays a role in gTuRC activation. Post-translationally, phosphorylated in vitro by CDK5. As to expression, widely expressed. Expressed in heart, brain, placenta, lung, liver, skeletal muscle, kidney and pancreas.

It is found in the cytoplasm. It localises to the cytoskeleton. Its subcellular location is the microtubule organizing center. The protein resides in the centrosome. The protein localises to the golgi apparatus. Potential regulator of CDK5 activity via its interaction with CDK5R1. Negative regulator of centriole disengagement (licensing) which maintains centriole engagement and cohesion. Involved in regulation of mitotic spindle orientation. Plays a role in the spindle checkpoint activation by acting as a transcriptional regulator of both BUBR1 and MAD2 promoter. Together with EB1/MAPRE1, may promote microtubule polymerization, bundle formation, growth and dynamics at the plus ends. Regulates centrosomal maturation by recruitment of the gamma-tubulin ring complex (gTuRC) onto centrosomes. In complex with PDE4DIP isoform 13/MMG8/SMYLE, MAPRE1 and AKAP9, contributes to microtubules nucleation and extension from the centrosome to the cell periphery. Required for the recruitment of AKAP9 to centrosomes. Plays a role in neurogenesis. The chain is CDK5 regulatory subunit-associated protein 2 (CDK5RAP2) from Homo sapiens (Human).